Reading from the N-terminus, the 443-residue chain is Large ribosomal subunit protein mL50 (443 aa).

The tract at residues 121–145 (QPTRADAPEKIRDPNYEPATSGAGL) is disordered. The span at 126–135 (DAPEKIRDPN) shows a compositional bias: basic and acidic residues.

It belongs to the mitochondrion-specific ribosomal protein mL50 family. In terms of assembly, component of the mitochondrial large ribosomal subunit (mt-LSU). Mature N.crassa 74S mitochondrial ribosomes consist of a small (37S) and a large (54S) subunit. The 37S small subunit contains a 16S ribosomal RNA (16S mt-rRNA) and 32 different proteins. The 54S large subunit contains a 23S rRNA (23S mt-rRNA) and 42 different proteins.

The protein localises to the mitochondrion. In terms of biological role, component of the mitochondrial ribosome (mitoribosome), a dedicated translation machinery responsible for the synthesis of mitochondrial genome-encoded proteins, including at least some of the essential transmembrane subunits of the mitochondrial respiratory chain. The mitoribosomes are attached to the mitochondrial inner membrane and translation products are cotranslationally integrated into the membrane. The sequence is that of Large ribosomal subunit protein mL50 (mrpl13) from Neurospora crassa (strain ATCC 24698 / 74-OR23-1A / CBS 708.71 / DSM 1257 / FGSC 987).